Consider the following 364-residue polypeptide: tRNA N6-adenosine threonylcarbamoyltransferase (364 aa).

2 residues coordinate Fe cation: His115 and His119. Substrate-binding positions include 137 to 141 (LVSGG), Asp170, Gly183, and Asn288. Asp316 provides a ligand contact to Fe cation. Positions 341–364 (PRSRWPLDEKSAPLIGTGRRGTKA) are disordered.

This sequence belongs to the KAE1 / TsaD family. Fe(2+) is required as a cofactor.

The protein localises to the cytoplasm. It catalyses the reaction L-threonylcarbamoyladenylate + adenosine(37) in tRNA = N(6)-L-threonylcarbamoyladenosine(37) in tRNA + AMP + H(+). Its function is as follows. Required for the formation of a threonylcarbamoyl group on adenosine at position 37 (t(6)A37) in tRNAs that read codons beginning with adenine. Is involved in the transfer of the threonylcarbamoyl moiety of threonylcarbamoyl-AMP (TC-AMP) to the N6 group of A37, together with TsaE and TsaB. TsaD likely plays a direct catalytic role in this reaction. This chain is tRNA N6-adenosine threonylcarbamoyltransferase, found in Bartonella henselae (strain ATCC 49882 / DSM 28221 / CCUG 30454 / Houston 1) (Rochalimaea henselae).